We begin with the raw amino-acid sequence, 254 residues long: Probable triosephosphate isomerase 2 (254 aa).

9 to 11 is a substrate binding site; the sequence is NMK. His96 serves as the catalytic Electrophile. The active-site Proton acceptor is Glu168. Substrate is bound by residues Gly174 and Ser212.

This sequence belongs to the triosephosphate isomerase family. In terms of assembly, homodimer.

The protein localises to the cytoplasm. It catalyses the reaction D-glyceraldehyde 3-phosphate = dihydroxyacetone phosphate. It participates in carbohydrate biosynthesis; gluconeogenesis. Its pathway is carbohydrate degradation; glycolysis; D-glyceraldehyde 3-phosphate from glycerone phosphate: step 1/1. Its function is as follows. Involved in the gluconeogenesis. Catalyzes stereospecifically the conversion of dihydroxyacetone phosphate (DHAP) to D-glyceraldehyde-3-phosphate (G3P). In Listeria monocytogenes serovar 1/2a (strain ATCC BAA-679 / EGD-e), this protein is Probable triosephosphate isomerase 2.